Consider the following 440-residue polypeptide: MTKLLAYFPSPPQGVWHLGPVPIRAYALFIIAGIVAALLIGDRRWEARGGERGVIYDIALWTVPFGLVGGRLYHLATDWRTYWGPGGAGFGAAVRIWDGGLGIWGAVALGAVGAWIGCRRHGIPLPAFADALAPGIILAQAIGRLGNYFNQELYGRETTLPWGLEIFYRRDPSGYIDPHSLDGVSTGQVALVVQPTFLYELLWNLLIFVALLYADRRLTLGHGRLFALYVAGYCVGRFCVELLRDDTATHIAGIRINSFTSTFVFIGAVVYLMAAPKGREDPESLRGNQYVEEEPAEPEPATVAATTEAATEGVAAPADGAEAAGADATAQRPEESAEPDVEKPESEETEAEAAEEPESEETEAAEEPGEPEAEEPEEPEAEEPEEPETEEPEADSDEEPEEESGEAPEQPVAEEPEPAPQQPETKRRWGARLRDRLSGR.

The next 4 membrane-spanning stretches (helical) occupy residues 21–41, 53–73, 96–116, and 122–142; these read VPIR…LLIG, GVIY…GRLY, IWDG…GAWI, and GIPL…AQAI. Arg144 provides a ligand contact to a 1,2-diacyl-sn-glycero-3-phospho-(1'-sn-glycerol). The next 2 helical transmembrane spans lie at 189-209 and 256-276; these read VALV…LIFV and INSF…MAAP. Positions 280–440 are disordered; the sequence is EDPESLRGNQ…ARLRDRLSGR (161 aa). Positions 299–330 are enriched in low complexity; the sequence is EPATVAATTEAATEGVAAPADGAEAAGADATA. The span at 332 to 346 shows a compositional bias: basic and acidic residues; it reads RPEESAEPDVEKPES. Residues 347–417 are compositionally biased toward acidic residues; the sequence is EETEAEAAEE…PEQPVAEEPE (71 aa). Residues 424-440 are compositionally biased toward basic and acidic residues; it reads ETKRRWGARLRDRLSGR.

Belongs to the Lgt family.

It is found in the cell membrane. The enzyme catalyses L-cysteinyl-[prolipoprotein] + a 1,2-diacyl-sn-glycero-3-phospho-(1'-sn-glycerol) = an S-1,2-diacyl-sn-glyceryl-L-cysteinyl-[prolipoprotein] + sn-glycerol 1-phosphate + H(+). It functions in the pathway protein modification; lipoprotein biosynthesis (diacylglyceryl transfer). In terms of biological role, catalyzes the transfer of the diacylglyceryl group from phosphatidylglycerol to the sulfhydryl group of the N-terminal cysteine of a prolipoprotein, the first step in the formation of mature lipoproteins. The chain is Phosphatidylglycerol--prolipoprotein diacylglyceryl transferase from Mycobacterium avium (strain 104).